A 251-amino-acid chain; its full sequence is MSLPATFDLTPEDAQLLLAANTHLGARNVQVHQEPYVFNTRPDGVNVINVGKTWEKIVLAARIIAAIPNPEDVCAISSRTYGQRAVLKFSAHTGATPIAGRFTPGSFTNYITRSFKEPRLIIVTDPRSDFQAIKEASYVNIPVIALTDLDSPSEYVDVAIPCNNRGKHSIGLVWYLLAREVLRLRGALVDRTQPWAIMPDLYFYRNPEEVEQQAVEEASATGATEEATEEATEETTEATEWAEDNTENATW.

At S2 the chain carries N-acetylserine. The segment covering A214 to E225 has biased composition (low complexity). The interval A214 to W251 is disordered. Over residues E226 to W251 the composition is skewed to acidic residues.

The protein belongs to the universal ribosomal protein uS2 family. Component of the small ribosomal subunit. Mature ribosomes consist of a small (40S) and a large (60S) subunit. The 40S subunit contains about 33 different proteins and 1 molecule of RNA (18S). The 60S subunit contains about 49 different proteins and 3 molecules of RNA (25S, 5.8S and 5S). Interacts with RPS21.

Its subcellular location is the cytoplasm. Required for the assembly and/or stability of the 40S ribosomal subunit. Required for the processing of the 20S rRNA-precursor to mature 18S rRNA in a late step of the maturation of 40S ribosomal subunits. This Vanderwaltozyma polyspora (strain ATCC 22028 / DSM 70294 / BCRC 21397 / CBS 2163 / NBRC 10782 / NRRL Y-8283 / UCD 57-17) (Kluyveromyces polysporus) protein is Small ribosomal subunit protein uS2B.